Reading from the N-terminus, the 291-residue chain is Insulin-like growth factor-binding protein 3 (291 aa).

The first 27 residues, 1 to 27, serve as a signal peptide directing secretion; the sequence is MLRARPALWAAALTALTLLRGPPAARA. Residues 28–134 are IGF-binding; the sequence is GAGTMGAGPV…LRPYLLPSAS (107 aa). The region spanning 36 to 119 is the IGFBP N-terminal domain; that stretch reads PVVRCEPCDA…LDGRGLCANA (84 aa). Disulfide bonds link Cys-40–Cys-69, Cys-43–Cys-71, Cys-51–Cys-72, Cys-60–Cys-75, Cys-83–Cys-96, and Cys-90–Cys-116. N-linked (GlcNAc...) asparagine glycans are attached at residues Asn-118 and Asn-136. 2 disordered regions span residues 132-162 and 177-211; these read SASG…RVPV and KGHA…TEYG. The span at 146-155 shows a compositional bias: polar residues; the sequence is MGSTENQAGP. Residue Ser-148 is modified to Phosphoserine. Residues 177-190 show a composition bias toward basic and acidic residues; it reads KGHAKDSQRYKVDY. A compositionally biased stretch (polar residues) spans 191 to 202; the sequence is ESQSTDTQNFSS. Asn-199 carries N-linked (GlcNAc...) asparagine glycosylation. The residue at position 201 (Ser-201) is a Phosphoserine. A Thyroglobulin type-1 domain is found at 210-285; sequence YGPCRREMED…DVKGKGDVHC (76 aa). 3 cysteine pairs are disulfide-bonded: Cys-213–Cys-240, Cys-251–Cys-262, and Cys-264–Cys-285.

In terms of assembly, interacts with XLKD1. Binds IGF2 more than IGF1. Forms a ternary complex of about 140 to 150 kDa with IGF1 or IGF2 and a 85 kDa glycoprotein (ALS). Interacts with humanin; humanin competes with importin KPNB1 for binding to IGFBP3, blocking IGFBP3 nuclear import and IGFBP3-mediated apoptosis. Interacts with TMEM219. Interacts with RXRA; this interaction modulates the transcriptional activity of RXRA. Interacts with LRP1; this interaction mediates cell growth inhibition independent of IGF1. Post-translationally, phosphorylated by FAM20C in the extracellular medium. Phosphorylated by CK2; resulting in decreased nuclear localization. In terms of tissue distribution, plasma; expressed by most tissues.

Its subcellular location is the secreted. It is found in the nucleus. In terms of biological role, multifunctional protein that plays a critical role in regulating the availability of IGFs such as IGF1 and IGF2 to their receptors and thereby regulates IGF-mediated cellular processes including proliferation, differentiation, and apoptosis in a cell-type specific manner. Also exhibits IGF-independent antiproliferative and apoptotic effects mediated by its receptor TMEM219/IGFBP-3R. Inhibits the positive effect of humanin on insulin sensitivity. Promotes testicular germ cell apoptosis. Acts via LRP-1/alpha2M receptor, also known as TGF-beta type V receptor, to mediate cell growth inhibition independent of IGF1. Mechanistically, induces serine-specific dephosphorylation of IRS1 or IRS2 upon ligation to its receptor, leading to the inhibitory cascade. In the nucleus, interacts with transcription factors such as retinoid X receptor-alpha/RXRA to regulate transcriptional signaling and apoptosis. The sequence is that of Insulin-like growth factor-binding protein 3 (IGFBP3) from Bos taurus (Bovine).